A 142-amino-acid polypeptide reads, in one-letter code: MRIMGLDFGERTIGVAVSDAMLLTAQGVKTIRRSPKELEELKTMLQDYEVDHIVLGYPKNMNGTLGPRAQATEEFAQILKEEFGLPVTLWDERLSTMGAQRSLLEADVSRAKRKQVIDKMAAVFILQGYLDYIRQKNGQNKE.

This sequence belongs to the YqgF nuclease family.

Its subcellular location is the cytoplasm. Functionally, could be a nuclease involved in processing of the 5'-end of pre-16S rRNA. The sequence is that of Putative pre-16S rRNA nuclease from Desulfitobacterium hafniense (strain DSM 10664 / DCB-2).